The following is a 472-amino-acid chain: ATP-dependent rRNA helicase rrp3 (472 aa).

The disordered stretch occupies residues 1–51; it reads MPDVKKRKIAHEAPEHGSDAESTSSHESVAQQDDTAETQDEAAATETRPAP. Basic and acidic residues predominate over residues 10–19; the sequence is AHEAPEHGSD. Over residues 20–29 the composition is skewed to polar residues; it reads AESTSSHESV. Positions 52–80 match the Q motif motif; the sequence is KSFKDLGIIDQLCEACETMGYKAPTPIQA. The 172-residue stretch at 83–254 folds into the Helicase ATP-binding domain; sequence IPLALQGRDL…RASLSNPLRV (172 aa). 96–103 serves as a coordination point for ATP; the sequence is AETGSGKT. Residues 202 to 205 carry the DEAD box motif; sequence DEAD. The Helicase C-terminal domain maps to 282 to 426; that stretch reads YLVYLLNEFV…EYELEKDEVM (145 aa). The tract at residues 451-472 is disordered; it reads GTKAKKFGKGKRSRDEMDQEEG. Residues 452-462 show a composition bias toward basic residues; sequence TKAKKFGKGKR.

Belongs to the DEAD box helicase family. DDX47/RRP3 subfamily. Interacts with the SSU processome.

The protein resides in the nucleus. It carries out the reaction ATP + H2O = ADP + phosphate + H(+). Functionally, ATP-dependent rRNA helicase required for pre-ribosomal RNA processing. Involved in the maturation of the 35S-pre-rRNA and to its cleavage to mature 18S rRNA. The polypeptide is ATP-dependent rRNA helicase rrp3 (Neosartorya fischeri (strain ATCC 1020 / DSM 3700 / CBS 544.65 / FGSC A1164 / JCM 1740 / NRRL 181 / WB 181) (Aspergillus fischerianus)).